A 428-amino-acid chain; its full sequence is Hercynine oxygenase (428 aa).

Histidine 46 provides a ligand contact to Fe cation. Gamma-L-glutamyl-L-cysteine is bound at residue 82 to 85; it reads RASR. Fe cation contacts are provided by histidine 129 and histidine 133. Gamma-L-glutamyl-L-cysteine-binding residues include aspartate 411 and arginine 415.

This sequence belongs to the EgtB family. Monomer. Requires Fe(2+) as cofactor.

The catalysed reaction is gamma-L-glutamyl-L-cysteine + hercynine + O2 = gamma-L-glutamyl-hercynylcysteine S-oxide + H2O. It participates in amino-acid biosynthesis; ergothioneine biosynthesis. Catalyzes the oxidative sulfurization of hercynine (N-alpha,N-alpha,N-alpha-trimethyl-L-histidine) into hercynyl-gamma-L-glutamyl-L-cysteine sulfoxide, a step in the biosynthesis pathway of ergothioneine. Cannot use the alternative thiols cysteine, N-acetylcysteine, or glutathione instead of gamma-glutamylcysteine as substrates, and histidine is a poor sulfur acceptor substrate compared to hercynine. The chain is Hercynine oxygenase from Mycolicibacterium smegmatis (strain ATCC 700084 / mc(2)155) (Mycobacterium smegmatis).